The chain runs to 289 residues: D-xylonolactone lactonase (289 aa).

Position 17 (glutamate 17) interacts with Fe(2+). The D-xylono-1,5-lactone site is built by arginine 98, asparagine 100, glutamate 119, and asparagine 145. The Fe(2+) site is built by asparagine 145 and aspartate 195. The active-site Proton donor/acceptor is the aspartate 195.

This sequence belongs to the SMP-30/CGR1 family. It depends on Fe(2+) as a cofactor.

It catalyses the reaction D-xylono-1,5-lactone + H2O = D-xylonate + H(+). Involved in the degradation of D-xylose. Catalyzes the hydrolysis of D-xylonolactone to D-xylonate. This is D-xylonolactone lactonase from Caulobacter vibrioides (strain ATCC 19089 / CIP 103742 / CB 15) (Caulobacter crescentus).